Reading from the N-terminus, the 800-residue chain is Nucleolar complex protein 3 homolog (800 aa).

Disordered stretches follow at residues 27-93 (KLKN…DMMD) and 160-187 (GIIPQTREKPVTDSNKDEEDQEEERELE). The span at 40–51 (KKYRKEQRKLRQ) shows a compositional bias: basic residues. The span at 66–78 (NPKEKRPGKRIER) shows a compositional bias: basic and acidic residues. Acidic residues predominate over residues 79–93 (EEEEEEEALPLDMMD). Over residues 160 to 174 (GIIPQTREKPVTDSN) the composition is skewed to basic and acidic residues. The span at 175–187 (KDEEDQEEERELE) shows a compositional bias: acidic residues. Lys-333 is covalently cross-linked (Glycyl lysine isopeptide (Lys-Gly) (interchain with G-Cter in SUMO2)). Residues 451–490 (KEKRKSLSRMQRKWKKAEEKLERELREAEASESTEKKLKL) adopt a coiled-coil conformation. Phosphoserine is present on Ser-787.

The protein belongs to the CBF/MAK21 family. Expressed in colon, heart, kidney, liver, lung, placenta, skeletal muscle, small intestine, spleen and thymus.

It localises to the nucleus. Its subcellular location is the nucleolus. The protein localises to the nucleus speckle. Functionally, may be required for adipogenesis. This is Nucleolar complex protein 3 homolog (NOC3L) from Homo sapiens (Human).